A 741-amino-acid polypeptide reads, in one-letter code: D-(-)-3-hydroxybutyrate oligomer hydrolase (741 aa).

Positions 1–23 are cleaved as a signal peptide; it reads MKTIQGKSPGRWYSRGMLLAAMA. Residues 45 to 68 are disordered; that stretch reads NGNAGGNGNNNGNNNGNTVSNTKP. S338 (charge relay system) is an active-site residue.

Belongs to the D-(-)-3-hydroxybutyrate oligomer hydrolase family.

Its subcellular location is the secreted. The catalysed reaction is (3R)-hydroxybutanoate dimer + H2O = 2 (R)-3-hydroxybutanoate + H(+). It participates in lipid metabolism; butanoate metabolism. Its function is as follows. Participates in the degradation of poly-3-hydroxybutyrate (PHB). It works downstream of poly(3-hydroxybutyrate) depolymerase, hydrolyzing D(-)-3-hydroxybutyrate oligomers of various length (3HB-oligomers) into 3HB-monomers. The protein is D-(-)-3-hydroxybutyrate oligomer hydrolase of Ralstonia pickettii (Burkholderia pickettii).